The primary structure comprises 535 residues: Cytochrome c oxidase subunit 1 (535 aa).

A helical transmembrane segment spans residues 21–43 (VLYFIFALFSAMIGTGLSAIIRL). Ca(2+)-binding residues include Glu44 and Gly49. A run of 6 helical transmembrane segments spans residues 63–85 (VITA…GGFG), 106–128 (ISFW…EAGA), 153–175 (IFSL…TTFI), 188–210 (PLFA…VLAA), 242–264 (YWWN…SHAV), and 271–293 (PVFG…FCVW). Position 67 (His67) interacts with Fe(II)-heme a. Residue His246 coordinates Cu cation. Positions 246–250 (HPEVY) form a cross-link, 1'-histidyl-3'-tyrosine (His-Tyr). Tyr250 is a binding site for O2. 2 residues coordinate Cu cation: His295 and His296. A run of 2 helical transmembrane segments spans residues 308–330 (AYFT…SWLA) and 342–364 (TALF…VVLA). His373 and Asp374 together coordinate Mg(2+). 3 consecutive transmembrane segments (helical) span residues 379–401 (VAHF…WYLW), 414–436 (LSHI…MHFL), and 456–478 (NQVA…YVVY). Position 381 (His381) interacts with heme a3. His383 lines the Fe(II)-heme a pocket.

Belongs to the heme-copper respiratory oxidase family. As to quaternary structure, component of the cytochrome c oxidase (complex IV, CIV), a multisubunit enzyme composed of a catalytic core of 3 subunits and several supernumerary subunits. The complex exists as a monomer or a dimer and forms supercomplexes (SCs) in the inner mitochondrial membrane with ubiquinol-cytochrome c oxidoreductase (cytochrome b-c1 complex, complex III, CIII). Heme serves as cofactor. The cofactor is Cu cation.

It localises to the mitochondrion inner membrane. The catalysed reaction is 4 Fe(II)-[cytochrome c] + O2 + 8 H(+)(in) = 4 Fe(III)-[cytochrome c] + 2 H2O + 4 H(+)(out). Its pathway is energy metabolism; oxidative phosphorylation. In terms of biological role, component of the cytochrome c oxidase, the last enzyme in the mitochondrial electron transport chain which drives oxidative phosphorylation. The respiratory chain contains 3 multisubunit complexes succinate dehydrogenase (complex II, CII), ubiquinol-cytochrome c oxidoreductase (cytochrome b-c1 complex, complex III, CIII) and cytochrome c oxidase (complex IV, CIV), that cooperate to transfer electrons derived from NADH and succinate to molecular oxygen, creating an electrochemical gradient over the inner membrane that drives transmembrane transport and the ATP synthase. Cytochrome c oxidase is the component of the respiratory chain that catalyzes the reduction of oxygen to water. Electrons originating from reduced cytochrome c in the intermembrane space (IMS) are transferred via the dinuclear copper A center (CU(A)) of subunit 2 and heme A of subunit 1 to the active site in subunit 1, a binuclear center (BNC) formed by heme A3 and copper B (CU(B)). The BNC reduces molecular oxygen to 2 water molecules using 4 electrons from cytochrome c in the IMS and 4 protons from the mitochondrial matrix. The protein is Cytochrome c oxidase subunit 1 (COX1) of Yarrowia lipolytica (strain CLIB 122 / E 150) (Yeast).